Here is a 217-residue protein sequence, read N- to C-terminus: Uracil-DNA glycosylase (217 aa).

Catalysis depends on Asp62, which acts as the Proton acceptor.

The protein belongs to the uracil-DNA glycosylase (UDG) superfamily. UNG family.

It localises to the cytoplasm. The enzyme catalyses Hydrolyzes single-stranded DNA or mismatched double-stranded DNA and polynucleotides, releasing free uracil.. Functionally, excises uracil residues from the DNA which can arise as a result of misincorporation of dUMP residues by DNA polymerase or due to deamination of cytosine. The sequence is that of Uracil-DNA glycosylase from Streptococcus pyogenes serotype M3 (strain ATCC BAA-595 / MGAS315).